Here is a 394-residue protein sequence, read N- to C-terminus: NAD(P)H-quinone oxidoreductase subunit H (394 aa).

This sequence belongs to the complex I 49 kDa subunit family. In terms of assembly, NDH-1 can be composed of about 15 different subunits; different subcomplexes with different compositions have been identified which probably have different functions.

Its subcellular location is the cellular thylakoid membrane. The catalysed reaction is a plastoquinone + NADH + (n+1) H(+)(in) = a plastoquinol + NAD(+) + n H(+)(out). It catalyses the reaction a plastoquinone + NADPH + (n+1) H(+)(in) = a plastoquinol + NADP(+) + n H(+)(out). In terms of biological role, NDH-1 shuttles electrons from an unknown electron donor, via FMN and iron-sulfur (Fe-S) centers, to quinones in the respiratory and/or the photosynthetic chain. The immediate electron acceptor for the enzyme in this species is believed to be plastoquinone. Couples the redox reaction to proton translocation, and thus conserves the redox energy in a proton gradient. Cyanobacterial NDH-1 also plays a role in inorganic carbon-concentration. This is NAD(P)H-quinone oxidoreductase subunit H from Acaryochloris marina (strain MBIC 11017).